Consider the following 425-residue polypeptide: Non-structural protein 2 (425 aa).

Positions 29–64 (VSFDELVALREENAKLKQENEALKAKLHRLESDWTT) form a coiled coil.

In Banna virus (BAV), this protein is Non-structural protein 2 (Segment-6).